The sequence spans 315 residues: N-acetyl-gamma-glutamyl-phosphate reductase (315 aa).

The active site involves Cys117.

It belongs to the NAGSA dehydrogenase family. Type 2 subfamily.

It is found in the cytoplasm. It catalyses the reaction N-acetyl-L-glutamate 5-semialdehyde + phosphate + NADP(+) = N-acetyl-L-glutamyl 5-phosphate + NADPH + H(+). It participates in amino-acid biosynthesis; L-arginine biosynthesis; N(2)-acetyl-L-ornithine from L-glutamate: step 3/4. Catalyzes the NADPH-dependent reduction of N-acetyl-5-glutamyl phosphate to yield N-acetyl-L-glutamate 5-semialdehyde. The chain is N-acetyl-gamma-glutamyl-phosphate reductase from Burkholderia lata (strain ATCC 17760 / DSM 23089 / LMG 22485 / NCIMB 9086 / R18194 / 383).